The chain runs to 641 residues: SH2 domain-containing protein A (641 aa).

Residues 355 to 384 (VNGNGTSMEWRPQNHEEDNSSTDSENTEMR) are disordered. The region spanning 547-641 (WIEGFVTKEE…SRLGRIIRGI (95 aa)) is the SH2 domain.

Phosphorylated on tyrosine residues. Expressed in roots, leaves, stems and flowers.

This Arabidopsis thaliana (Mouse-ear cress) protein is SH2 domain-containing protein A.